Reading from the N-terminus, the 83-residue chain is Toxin CjTL8 (83 aa).

The N-terminal stretch at Met1–Ala20 is a signal peptide. The propeptide occupies Lys21–Arg44. A Phenylalanine amide modification is found at Phe81.

Post-translationally, contains 3 disulfide bonds.

Its subcellular location is the secreted. It localises to the nematocyst. Functionally, in vivo, induces immediate paralysis on shrimps (C.multidentata), followed by death when high doses are injected. No activity is observed when injected into fly larvae (M.domestica). This chain is Toxin CjTL8, found in Epiactis japonica (Sea anemone).